The following is a 626-amino-acid chain: Chaperone protein HtpG (626 aa).

Residues 1-339 are a; substrate-binding; that stretch reads MSTNQETRGF…SNDLPLNVSR (339 aa). The segment at 340–555 is b; sequence EILQDNKVTA…NDQMTTQMAK (216 aa). The interval 556-626 is c; the sequence is LFAAAGQPVP…FIKRVNNLLG (71 aa).

It belongs to the heat shock protein 90 family. In terms of assembly, homodimer.

The protein resides in the cytoplasm. Its function is as follows. Molecular chaperone. Has ATPase activity. The chain is Chaperone protein HtpG from Histophilus somni (strain 2336) (Haemophilus somnus).